Consider the following 348-residue polypeptide: Ion-translocating oxidoreductase complex subunit D (348 aa).

3 helical membrane passes run 20–39 (LMKW…TYFF), 72–91 (ALRD…AIPP), and 120–140 (PFNP…VQMT). At threonine 187 the chain carries FMN phosphoryl threonine. 5 helical membrane passes run 214–234 (LAGV…LVLI), 241–261 (WHIP…FLMF), 266–286 (TASP…FFIA), 300–320 (LVFG…GGFP), and 321–341 (DGVA…DYYT).

This sequence belongs to the NqrB/RnfD family. The complex is composed of six subunits: RnfA, RnfB, RnfC, RnfD, RnfE and RnfG. FMN is required as a cofactor.

It is found in the cell inner membrane. Functionally, part of a membrane-bound complex that couples electron transfer with translocation of ions across the membrane. In Vibrio atlanticus (strain LGP32) (Vibrio splendidus (strain Mel32)), this protein is Ion-translocating oxidoreductase complex subunit D.